The sequence spans 408 residues: Multidrug resistance protein MdtG (408 aa).

10 helical membrane passes run 16–36 (LIVA…VMPF), 58–78 (IVFS…GGLA), 92–112 (LGMG…QFLI), 115–135 (ALLG…ATQV), 146–166 (TLST…GLLA), 173–193 (PVFF…LFCI), 224–244 (LFVT…ILTL), 256–276 (VAFI…LSAP), 290–310 (ILIT…YVQT), and 378–398 (AVFL…WNSL).

This sequence belongs to the major facilitator superfamily. DHA1 family. MdtG (TC 2.A.1.2.20) subfamily.

Its subcellular location is the cell inner membrane. Its function is as follows. Confers resistance to fosfomycin and deoxycholate. The polypeptide is Multidrug resistance protein MdtG (Escherichia coli O17:K52:H18 (strain UMN026 / ExPEC)).